Consider the following 97-residue polypeptide: Large ribosomal subunit protein bL28 (97 aa).

The protein belongs to the bacterial ribosomal protein bL28 family.

The polypeptide is Large ribosomal subunit protein bL28 (Brucella ovis (strain ATCC 25840 / 63/290 / NCTC 10512)).